The chain runs to 367 residues: Peptide chain release factor 2 (367 aa).

The residue at position 254 (Gln254) is an N5-methylglutamine.

The protein belongs to the prokaryotic/mitochondrial release factor family. Methylated by PrmC. Methylation increases the termination efficiency of RF2.

It is found in the cytoplasm. Its function is as follows. Peptide chain release factor 2 directs the termination of translation in response to the peptide chain termination codons UGA and UAA. The protein is Peptide chain release factor 2 of Bordetella avium (strain 197N).